The sequence spans 253 residues: Triosephosphate isomerase, cytosolic (253 aa).

The substrate site is built by asparagine 10 and lysine 12. The active-site Electrophile is the histidine 96. Glutamate 166 acts as the Proton acceptor in catalysis.

The protein belongs to the triosephosphate isomerase family. In terms of assembly, homodimer.

It is found in the cytoplasm. The catalysed reaction is D-glyceraldehyde 3-phosphate = dihydroxyacetone phosphate. The protein operates within carbohydrate biosynthesis; gluconeogenesis. It functions in the pathway carbohydrate degradation; glycolysis; D-glyceraldehyde 3-phosphate from glycerone phosphate: step 1/1. This Oryza sativa subsp. japonica (Rice) protein is Triosephosphate isomerase, cytosolic (TPI).